Consider the following 190-residue polypeptide: Biphenyl-2,3-diol 1,2-dioxygenase 3 (190 aa).

The VOC domain occupies 6–125 (RLAHFVLQTN…DGNMVELQID (120 aa)). Positions 9, 73, and 121 each coordinate Fe cation.

It belongs to the extradiol ring-cleavage dioxygenase family. In terms of assembly, homohexamer. It depends on Fe(2+) as a cofactor.

It catalyses the reaction biphenyl-2,3-diol + O2 = 2-hydroxy-6-oxo-6-phenylhexa-2,4-dienoate + H(+). It functions in the pathway xenobiotic degradation; biphenyl degradation; 2-hydroxy-2,4-pentadienoate and benzoate from biphenyl: step 3/4. This Rhodococcus globerulus protein is Biphenyl-2,3-diol 1,2-dioxygenase 3 (bphC3).